Reading from the N-terminus, the 430-residue chain is MRLLIRNAYVIPVAGSDFTGDVAVEEGRIVFAGPTGAVPGTFEADETIDATGMVATPGLVNCHTHAAMTLFRGYADDLPLMEWLTRKIWPVENLLTGDDIYWGSLLAGLEMLKSGTTTFADQYFEMDRVAQAVEEIGLRASLCRGLIGVSEHAEKALAEGCEFVRRWHGAAAGRISAMLGPHAPYTCPPAYLKKVVAASEELDVGLHIHLSETRTEIEQIKAEYGCSPIALMEETGLFHRPVLAAHCVHLSEADIKILARRGVGVAHNPQSNMKLASGIAPVVRMLAAGVRVGIGTDGAASNNDLNMVEEMRTAALLQKVAQGDPTVLPAGLVLEMATAGGARVLGLEDRIGTLEVGKRADVVLWRVNQPHLCPAHNYQAHLVYSAGRADVDTVIVDGHVVMRGRRVLTVDEETVLRQAERTARRLIESV.

Zn(2+) contacts are provided by histidine 63 and histidine 65. Residues glutamate 92, arginine 144, and histidine 182 each contribute to the substrate site. A Zn(2+)-binding site is contributed by histidine 209. Substrate contacts are provided by glutamate 212 and aspartate 297. Zn(2+) is bound at residue aspartate 297.

This sequence belongs to the metallo-dependent hydrolases superfamily. MTA/SAH deaminase family. Zn(2+) is required as a cofactor.

The catalysed reaction is S-adenosyl-L-homocysteine + H2O + H(+) = S-inosyl-L-homocysteine + NH4(+). It carries out the reaction S-methyl-5'-thioadenosine + H2O + H(+) = S-methyl-5'-thioinosine + NH4(+). In terms of biological role, catalyzes the deamination of 5-methylthioadenosine and S-adenosyl-L-homocysteine into 5-methylthioinosine and S-inosyl-L-homocysteine, respectively. Is also able to deaminate adenosine. The polypeptide is 5-methylthioadenosine/S-adenosylhomocysteine deaminase (Desulforudis audaxviator (strain MP104C)).